The primary structure comprises 234 residues: Thiamine import ATP-binding protein ThiQ (234 aa).

Residues 2–230 (LTLQQVHYYY…HSHPELVEFF (229 aa)) form the ABC transporter domain. 32–39 (GPSGAGKS) contributes to the ATP binding site.

Belongs to the ABC transporter superfamily. Thiamine importer (TC 3.A.1.19.1) family. The complex is composed of two ATP-binding proteins (ThiQ), two transmembrane proteins (ThiP) and a solute-binding protein (ThiB).

The protein localises to the cell inner membrane. The catalysed reaction is thiamine(out) + ATP + H2O = thiamine(in) + ADP + phosphate + H(+). Functionally, part of the ABC transporter complex ThiBPQ involved in thiamine import. Responsible for energy coupling to the transport system. The protein is Thiamine import ATP-binding protein ThiQ of Vibrio vulnificus (strain CMCP6).